Here is a 380-residue protein sequence, read N- to C-terminus: Histidinol-phosphate aminotransferase (380 aa).

Lys232 is subject to N6-(pyridoxal phosphate)lysine.

The protein belongs to the class-II pyridoxal-phosphate-dependent aminotransferase family. Histidinol-phosphate aminotransferase subfamily. As to quaternary structure, homodimer. Requires pyridoxal 5'-phosphate as cofactor.

It carries out the reaction L-histidinol phosphate + 2-oxoglutarate = 3-(imidazol-4-yl)-2-oxopropyl phosphate + L-glutamate. The protein operates within amino-acid biosynthesis; L-histidine biosynthesis; L-histidine from 5-phospho-alpha-D-ribose 1-diphosphate: step 7/9. The polypeptide is Histidinol-phosphate aminotransferase (Mycobacterium bovis (strain BCG / Pasteur 1173P2)).